The primary structure comprises 559 residues: Poly(3-hydroxyalkanoate) polymerase 1 (559 aa).

Cysteine 296 is a catalytic residue.

The protein belongs to the PHA/PHB synthase family. Type II PhaC subfamily.

It participates in biopolymer metabolism; poly-(R)-3-hydroxybutanoate biosynthesis. In terms of biological role, synthesizes poly(3-hydroxyalkanoates) (PHA), complements a mutant of P.putida that does not make PHA. The protein is Poly(3-hydroxyalkanoate) polymerase 1 of Ectopseudomonas oleovorans (Pseudomonas oleovorans).